A 1032-amino-acid chain; its full sequence is tRNA wybutosine-synthesizing protein 4 (1032 aa).

S-adenosyl-L-methionine is bound by residues arginine 69, glycine 95, aspartate 122, 169-170 (DL), and glutamate 196. The disordered stretch occupies residues 702-726 (ESVEPNKSQSEKATSKPSAQSQNEP). Over residues 716–725 (SKPSAQSQNE) the composition is skewed to polar residues. The JmjC domain occupies 833–988 (PTKLPANLAV…AAGRDVYGNR (156 aa)).

Belongs to the methyltransferase superfamily. LCMT family.

It carries out the reaction 7-[(3S)-3-amino-3-carboxypropyl]wyosine(37) in tRNA(Phe) + S-adenosyl-L-methionine = 7-[(3S)-(3-amino-3-methoxycarbonyl)propyl]wyosine(37) in tRNA(Phe) + S-adenosyl-L-homocysteine. It catalyses the reaction 7-[(3S)-(3-amino-3-methoxycarbonyl)propyl]wyosine(37) in tRNA(Phe) + S-adenosyl-L-methionine + CO2 = wybutosine(37) in tRNA(Phe) + S-adenosyl-L-homocysteine + 2 H(+). It participates in tRNA modification; wybutosine-tRNA(Phe) biosynthesis. Functionally, probable S-adenosyl-L-methionine-dependent methyltransferase that acts as a component of the wybutosine biosynthesis pathway. Wybutosine is a hyper modified guanosine with a tricyclic base found at the 3'-position adjacent to the anticodon of eukaryotic phenylalanine tRNA. May methylate the carboxyl group of leucine residues to form alpha-leucine ester residues. This chain is tRNA wybutosine-synthesizing protein 4 (ppm2), found in Aspergillus oryzae (strain ATCC 42149 / RIB 40) (Yellow koji mold).